A 516-amino-acid chain; its full sequence is 3-phosphoshikimate 1-carboxyvinyltransferase, chloroplastic (516 aa).

A chloroplast-targeting transit peptide spans 1 to 72 (MAQSSRICHG…KVTASVSTSE (72 aa)). Residues Lys-95, Ser-96, and Arg-100 each contribute to the 3-phosphoshikimate site. A phosphoenolpyruvate-binding site is contributed by Lys-95. Gly-173 and Arg-203 together coordinate phosphoenolpyruvate. 3-phosphoshikimate is bound by residues Ser-250, Ser-251, Gln-252, Ser-278, Asp-403, and Lys-430. Position 252 (Gln-252) interacts with phosphoenolpyruvate. Asp-403 (proton acceptor) is an active-site residue. Residues Arg-434, Arg-476, and Lys-501 each coordinate phosphoenolpyruvate.

Belongs to the EPSP synthase family.

The protein localises to the plastid. The protein resides in the chloroplast. It catalyses the reaction 3-phosphoshikimate + phosphoenolpyruvate = 5-O-(1-carboxyvinyl)-3-phosphoshikimate + phosphate. It participates in metabolic intermediate biosynthesis; chorismate biosynthesis; chorismate from D-erythrose 4-phosphate and phosphoenolpyruvate: step 6/7. In terms of biological role, catalyzes the transfer of the enolpyruvyl moiety of phosphoenolpyruvate (PEP) to the 5-hydroxyl of shikimate-3-phosphate (S3P) to produce enolpyruvyl shikimate-3-phosphate and inorganic phosphate. This Brassica napus (Rape) protein is 3-phosphoshikimate 1-carboxyvinyltransferase, chloroplastic.